We begin with the raw amino-acid sequence, 536 residues long: Nuclear hormone receptor family member nhr-7 (536 aa).

A DNA-binding region (nuclear receptor) is located at residues 6-82 (NRICAVCGDT…VGMNPDYVRP (77 aa)). 2 consecutive NR C4-type zinc fingers follow at residues 9–29 (CAVC…CFGC) and 46–70 (CRFE…FRKC). One can recognise an NR LBD domain in the interval 155-378 (ADRSLARKTG…PFHKILTDII (224 aa)). Residues 427–465 (SPCQISAPPPPQQQYTDYSQMPSTSSYPANSSPFQSPYR) are disordered. Over residues 439–465 (QQYTDYSQMPSTSSYPANSSPFQSPYR) the composition is skewed to polar residues.

The protein belongs to the nuclear hormone receptor family.

It is found in the nucleus. Orphan nuclear receptor. In Caenorhabditis elegans, this protein is Nuclear hormone receptor family member nhr-7 (nhr-7).